We begin with the raw amino-acid sequence, 490 residues long: RNA-binding protein P (490 aa).

The segment at 1–112 is disordered; that stretch reads MGKKRKLDSK…EEEEAAERDA (112 aa). Positions 13-36 are enriched in low complexity; the sequence is AAARSAAARAAAAAAAAAAAAAVA. Residues 74–108 are compositionally biased toward acidic residues; sequence GGEEEEVEEVEVEEEVEVDEDEDGEGEGEEEEEAA. 2 RRM domains span residues 156-233 and 267-343; these read RKIF…LASV and RKIF…QKAI.

As to quaternary structure, forms homodimers. Interacts with RBP-L and RBP-208. Interacts with NSF.

It localises to the nucleus. The protein resides in the cytoplasm. RNA-binding protein that binds to a cis-localization element or zipcode, within the 5'-CDS of prolamine RNA. Binds strongly to glutelin mRNA, particularly to 3'-UTR and zipcode RNA. Recognizes and binds to glutelin zipcode RNA, which is required for proper mRNA localization to cisternal endoplasmic reticulum. Exhibits strong binding activity to a glutelin intron sequence and may participate in mRNA splicing. Required for the correct localization of glutelin and prolamine mRNA in endosperm cells during grain development. RBP-P and RBP-L form a quaternary complex with the membrane trafficking factors NSF and RAB5A. This quaternay complex carries glutelin mRNAs for active transport on endosomes to the cortical endoplasmic reticulum membrane, and enables endosome-mediated glutelin mRNA transport in endosperm cells. The chain is RNA-binding protein P from Oryza sativa subsp. japonica (Rice).